A 270-amino-acid polypeptide reads, in one-letter code: Phosphatidate cytidylyltransferase (270 aa).

The next 7 helical transmembrane spans lie at 19–39 (LWLT…IGLA), 53–73 (TAFS…LLIL), 76–96 (GALL…VTQW), 101–121 (GWPA…SLLR), 126–146 (FGFT…IAAY), 183–203 (LVAS…ALLL), and 248–268 (ALLY…AIFF).

Belongs to the CDS family.

The protein resides in the cell inner membrane. The catalysed reaction is a 1,2-diacyl-sn-glycero-3-phosphate + CTP + H(+) = a CDP-1,2-diacyl-sn-glycerol + diphosphate. It participates in phospholipid metabolism; CDP-diacylglycerol biosynthesis; CDP-diacylglycerol from sn-glycerol 3-phosphate: step 3/3. The sequence is that of Phosphatidate cytidylyltransferase (cdsA) from Brucella suis biovar 1 (strain 1330).